Consider the following 332-residue polypeptide: D-galactose/methyl-galactoside binding periplasmic protein MglB (332 aa).

The signal sequence occupies residues 1–23 (MNKKVLTLSAVMASLLFGAHAHA). Aspartate 37 and asparagine 114 together coordinate beta-D-galactose. Beta-D-glucose contacts are provided by aspartate 37 and asparagine 114. Ca(2+)-binding residues include aspartate 157, asparagine 159, aspartate 161, lysine 163, and glutamine 165. Beta-D-galactose-binding residues include histidine 175, aspartate 177, and arginine 181. Beta-D-glucose is bound by residues histidine 175, aspartate 177, and arginine 181. Residue glutamate 228 participates in Ca(2+) binding. Beta-D-galactose contacts are provided by asparagine 234, aspartate 259, and asparagine 279. 3 residues coordinate beta-D-glucose: asparagine 234, aspartate 259, and asparagine 279.

It belongs to the bacterial solute-binding protein 2 family. The ABC transporter complex is composed of one ATP-binding protein (MglA), two transmembrane proteins (MglC) and a solute-binding protein (MglB).

Its subcellular location is the periplasm. In terms of biological role, part of the ABC transporter complex MglABC involved in galactose/methyl galactoside import. In addition, binds D-galactose and D-glucose and plays a role in the chemotaxis towards these two sugars by interacting with the Trg chemoreceptor. The sequence is that of D-galactose/methyl-galactoside binding periplasmic protein MglB (mglB) from Salmonella typhimurium (strain LT2 / SGSC1412 / ATCC 700720).